A 517-amino-acid chain; its full sequence is Superoxide-generating NADPH oxidase heavy chain subunit A (517 aa).

The Cytoplasmic segment spans residues Met1–Lys19. A helical transmembrane segment spans residues Leu20–His40. Residues Tyr41–Gln62 lie on the Extracellular side of the membrane. The region spanning Arg58 to Val201 is the Ferric oxidoreductase domain. The helical transmembrane segment at Leu63–Leu83 threads the bilayer. Topologically, residues Arg84–Asn97 are cytoplasmic. Residues Ile98–Ala118 traverse the membrane as a helical segment. 2 residues coordinate heme: His101 and His115. The Extracellular portion of the chain corresponds to His119–Lys149. Residues Tyr150–Met170 traverse the membrane as a helical segment. The Cytoplasmic portion of the chain corresponds to Tyr171–Glu184. Residues Gly185–Leu205 traverse the membrane as a helical segment. Positions 190 and 203 each coordinate heme. A topological domain (extracellular) is located at residue His206. A helical transmembrane segment spans residues Ser207 to Val227. The Cytoplasmic segment spans residues Glu228–Phe517. The FAD-binding FR-type domain maps to Arg229–Glu349. His283–Ser289 contacts FAD.

Composed of a heavy chain and a light chain. It depends on FAD as a cofactor.

The protein localises to the membrane. Its function is as follows. Critical component of the membrane-bound oxidase that generates superoxide. It is the terminal component of a respiratory chain that transfers single electrons from cytoplasmic NADPH across the plasma membrane to molecular oxygen on the exterior. This is Superoxide-generating NADPH oxidase heavy chain subunit A (noxA) from Dictyostelium discoideum (Social amoeba).